The sequence spans 148 residues: Gag-Pol polyprotein (148 aa).

The Integrase catalytic domain maps to 1–64 (IPYNPQSQGV…SAGERIIDII (64 aa)). Glutamate 12 contacts Mg(2+). Residues 83–130 (FRVYYRDSRDPIWKGPAKLLWKGEGAVVIQDNSDIKVVPRRKVKIIRD) constitute a DNA-binding region (integrase-type).

In terms of assembly, homotetramer; may further associate as a homohexadecamer. Part of the pre-integration complex (PIC) which is composed of viral genome, matrix protein, Vpr and integrase. Interacts with human SMARCB1/INI1 and human PSIP1/LEDGF isoform 1. Interacts with human KPNA3; this interaction might play a role in nuclear import of the pre-integration complex. Interacts with human NUP153; this interaction might play a role in nuclear import of the pre-integration complex. In terms of processing, specific enzymatic cleavages by the viral protease yield mature proteins.

Catalyzes viral DNA integration into the host chromosome, by performing a series of DNA cutting and joining reactions. This enzyme activity takes place after virion entry into a cell and reverse transcription of the RNA genome in dsDNA. The first step in the integration process is 3' processing. This step requires a complex comprising the viral genome, matrix protein, Vpr and integrase. This complex is called the pre-integration complex (PIC). The integrase protein removes 2 nucleotides from each 3' end of the viral DNA, leaving recessed CA OH's at the 3' ends. In the second step, the PIC enters cell nucleus. This process is mediated through integrase and Vpr proteins, and allows the virus to infect a non dividing cell. This ability to enter the nucleus is specific of lentiviruses, other retroviruses cannot and rely on cell division to access cell chromosomes. In the third step, termed strand transfer, the integrase protein joins the previously processed 3' ends to the 5' ends of strands of target cellular DNA at the site of integration. The 5'-ends are produced by integrase-catalyzed staggered cuts, 5 bp apart. A Y-shaped, gapped, recombination intermediate results, with the 5'-ends of the viral DNA strands and the 3' ends of target DNA strands remaining unjoined, flanking a gap of 5 bp. The last step is viral DNA integration into host chromosome. This involves host DNA repair synthesis in which the 5 bp gaps between the unjoined strands are filled in and then ligated. Since this process occurs at both cuts flanking the HIV genome, a 5 bp duplication of host DNA is produced at the ends of HIV-1 integration. Alternatively, Integrase may catalyze the excision of viral DNA just after strand transfer, this is termed disintegration. This Homo sapiens (Human) protein is Gag-Pol polyprotein (gag-pol).